The following is a 253-amino-acid chain: tRNA 2'-phosphotransferase 1 (253 aa).

Residue Met1 is modified to N-acetylmethionine. Disordered regions lie at residues 1–29 (MNFS…DRDV) and 225–253 (KPLS…RIQQ). Phosphoserine is present on Ser240. Positions 243–253 (HSSRERRRIQQ) are enriched in basic residues.

Belongs to the KptA/TPT1 family. Widely expressed. Weakly or not expressed in lung, spleen, small intestine and peripheral blood leukocytes.

The catalysed reaction is 2'-phospho-[ligated tRNA] + NAD(+) = mature tRNA + ADP-alpha-D-ribose 1'',2''-cyclic phosphate + nicotinamide. Functionally, catalyzes the last step of tRNA splicing, the transfer of the splice junction 2'-phosphate from ligated tRNA to NAD to produce ADP-ribose 1''-2'' cyclic phosphate. In Homo sapiens (Human), this protein is tRNA 2'-phosphotransferase 1 (TRPT1).